Here is a 337-residue protein sequence, read N- to C-terminus: tRNA-cytidine(32) 2-sulfurtransferase (337 aa).

A PP-loop motif motif is present at residues 71–76 (SGGKDS). [4Fe-4S] cluster is bound by residues Cys146, Cys149, and Cys237.

It belongs to the TtcA family. As to quaternary structure, homodimer. It depends on Mg(2+) as a cofactor. Requires [4Fe-4S] cluster as cofactor.

It is found in the cytoplasm. The enzyme catalyses cytidine(32) in tRNA + S-sulfanyl-L-cysteinyl-[cysteine desulfurase] + AH2 + ATP = 2-thiocytidine(32) in tRNA + L-cysteinyl-[cysteine desulfurase] + A + AMP + diphosphate + H(+). Its pathway is tRNA modification. In terms of biological role, catalyzes the ATP-dependent 2-thiolation of cytidine in position 32 of tRNA, to form 2-thiocytidine (s(2)C32). The sulfur atoms are provided by the cysteine/cysteine desulfurase (IscS) system. The sequence is that of tRNA-cytidine(32) 2-sulfurtransferase from Burkholderia vietnamiensis (strain G4 / LMG 22486) (Burkholderia cepacia (strain R1808)).